Reading from the N-terminus, the 548-residue chain is Inosine-5'-monophosphate dehydrogenase (548 aa).

CBS domains lie at 121-201 (FILD…EDPV) and 205-261 (MSTE…PLAS). NAD(+)-binding positions include 298 to 300 (DSS) and 348 to 350 (GMG). K(+) contacts are provided by glycine 350 and glycine 352. An IMP-binding site is contributed by serine 353. Residue cysteine 355 participates in K(+) binding. Residue cysteine 355 is the Thioimidate intermediate of the active site. IMP contacts are provided by residues 388 to 390 (DGG) and 411 to 412 (GS). The active-site Proton acceptor is arginine 461. Residue glutamine 473 coordinates IMP. The interval 527-548 (ASAQTEGNVHGLHSHEKKLYSS) is disordered. Residue serine 528 coordinates K(+). Positions 539–548 (HSHEKKLYSS) are enriched in basic and acidic residues.

This sequence belongs to the IMPDH/GMPR family. Homotetramer. Requires K(+) as cofactor.

It is found in the cytoplasm. The enzyme catalyses IMP + NAD(+) + H2O = XMP + NADH + H(+). It participates in purine metabolism; XMP biosynthesis via de novo pathway; XMP from IMP: step 1/1. Its activity is regulated as follows. Mycophenolic acid (MPA) is a non-competitive inhibitor that prevents formation of the closed enzyme conformation by binding to the same site as the amobile flap. In contrast, mizoribine monophosphate (MZP) is a competitive inhibitor that induces the closed conformation. MPA is a potent inhibitor of mammalian IMPDHs but a poor inhibitor of the bacterial enzymes. MZP is a more potent inhibitor of bacterial IMPDH. Catalyzes the conversion of inosine 5'-phosphate (IMP) to xanthosine 5'-phosphate (XMP), the first committed and rate-limiting step in the de novo synthesis of guanine nucleotides, and therefore plays an important role in the regulation of cell growth. Part of the gene cluster that mediates the biosynthesis of mycophenolic acid (MPA), the first isolated antibiotic natural product in the world. Does not play a role in the biosynthesis of MPA, but is involved in self resistance to MPA, since MPA acts as an inhibitor of IMP dehydrogenases. The chain is Inosine-5'-monophosphate dehydrogenase from Penicillium brevicompactum.